The primary structure comprises 284 residues: Ribosomal RNA small subunit methyltransferase A (284 aa).

S-adenosyl-L-methionine contacts are provided by asparagine 27, leucine 29, glycine 54, glutamate 75, aspartate 100, and asparagine 125.

It belongs to the class I-like SAM-binding methyltransferase superfamily. rRNA adenine N(6)-methyltransferase family. RsmA subfamily.

It is found in the cytoplasm. It catalyses the reaction adenosine(1518)/adenosine(1519) in 16S rRNA + 4 S-adenosyl-L-methionine = N(6)-dimethyladenosine(1518)/N(6)-dimethyladenosine(1519) in 16S rRNA + 4 S-adenosyl-L-homocysteine + 4 H(+). Functionally, specifically dimethylates two adjacent adenosines (A1518 and A1519) in the loop of a conserved hairpin near the 3'-end of 16S rRNA in the 30S particle. May play a critical role in biogenesis of 30S subunits. In Protochlamydia amoebophila (strain UWE25), this protein is Ribosomal RNA small subunit methyltransferase A.